We begin with the raw amino-acid sequence, 217 residues long: Cytidylate kinase (217 aa).

10 to 18 provides a ligand contact to ATP; that stretch reads GPAGAGKST.

It belongs to the cytidylate kinase family. Type 1 subfamily.

The protein resides in the cytoplasm. The catalysed reaction is CMP + ATP = CDP + ADP. It carries out the reaction dCMP + ATP = dCDP + ADP. In Clostridium botulinum (strain Okra / Type B1), this protein is Cytidylate kinase.